Reading from the N-terminus, the 319-residue chain is MARKKITLVGAGNIGGTLAHLALIKQLGDVVLFDIAQGMPNGKALDLLQTCPIEGVDFKVRGTNDYKDLENSDVVIVTAGVPRKPGMSRDDLLGINIKVMQTVGEGIKHNCPNAFVICITNPLDIMVNMLQKFSGVPDNKIVGMAGVLDSARFRTFLADELNVSVQQVQAYVMGGHGDTMVPLTKMSNVAGVSLEQLVKEGKLKQERLDAIVSRTRSGGGEIVALLKTGSAYYAPAAAGIQMAESFLKDKKMILPCAAKVKAGMYGLDEDLFVGVPTEISANGVRPIEVEISDKEREQLQVSINAVKDLNKVAAEILAK.

NAD(+) contacts are provided by residues 10-15 and D34; that span reads GAGNIG. 2 residues coordinate substrate: R83 and R89. Residues N96 and 119 to 121 each bind NAD(+); that span reads ITN. Residues N121 and R152 each coordinate substrate. H176 functions as the Proton acceptor in the catalytic mechanism.

It belongs to the LDH/MDH superfamily. MDH type 3 family.

The catalysed reaction is (S)-malate + NAD(+) = oxaloacetate + NADH + H(+). Its function is as follows. Catalyzes the reversible oxidation of malate to oxaloacetate. The protein is Malate dehydrogenase of Francisella tularensis subsp. mediasiatica (strain FSC147).